Reading from the N-terminus, the 252-residue chain is Cell division protein ZapD (252 aa).

It belongs to the ZapD family. As to quaternary structure, interacts with FtsZ.

The protein resides in the cytoplasm. Its function is as follows. Cell division factor that enhances FtsZ-ring assembly. Directly interacts with FtsZ and promotes bundling of FtsZ protofilaments, with a reduction in FtsZ GTPase activity. The protein is Cell division protein ZapD of Cupriavidus pinatubonensis (strain JMP 134 / LMG 1197) (Cupriavidus necator (strain JMP 134)).